The following is a 337-amino-acid chain: Ornithine carbamoyltransferase (337 aa).

Carbamoyl phosphate-binding positions include 57 to 60, Gln84, Arg108, and 135 to 138; these read STRT and HPTQ. L-ornithine contacts are provided by residues Asn167, Asp231, and 235–236; that span reads SM. Residues 272 to 273 and Arg317 contribute to the carbamoyl phosphate site; that span reads CL.

The protein belongs to the aspartate/ornithine carbamoyltransferase superfamily. OTCase family.

It localises to the cytoplasm. The enzyme catalyses carbamoyl phosphate + L-ornithine = L-citrulline + phosphate + H(+). The protein operates within amino-acid degradation; L-arginine degradation via ADI pathway; carbamoyl phosphate from L-arginine: step 2/2. Its function is as follows. Reversibly catalyzes the transfer of the carbamoyl group from carbamoyl phosphate (CP) to the N(epsilon) atom of ornithine (ORN) to produce L-citrulline. The polypeptide is Ornithine carbamoyltransferase (Streptococcus uberis (strain ATCC BAA-854 / 0140J)).